Reading from the N-terminus, the 403-residue chain is uncharacterized protein (403 aa).

A compositionally biased stretch (polar residues) spans 55–88; it reads LTGSPNPQATPKQENKSNFFSEKQSVRENGNSSA. The disordered stretch occupies residues 55–95; sequence LTGSPNPQATPKQENKSNFFSEKQSVRENGNSSAGEKKQKW. Position 58 is a phosphoserine (Ser58). One can recognise a J domain in the interval 113–177; that stretch reads QYYEILDLKK…NLRAHYDRTG (65 aa). Residues 263–283 traverse the membrane as a helical segment; it reads SIFYQLLPLIVVILFAFLSNF.

Its subcellular location is the endoplasmic reticulum membrane. This is an uncharacterized protein from Schizosaccharomyces pombe (strain 972 / ATCC 24843) (Fission yeast).